Consider the following 1725-residue polypeptide: Latrophilin Cirl (1725 aa).

Over 1–757 (MALNELGNCA…LFTMFDGNMR (757 aa)) the chain is Extracellular. The 90-residue stretch at 18–107 (ACEGKQLTIE…KYLEAHYQCI (90 aa)) folds into the SUEL-type lectin domain. Residue N135 is glycosylated (N-linked (GlcNAc...) asparagine). The interval 164–284 (AVQPTHSTPS…SAANNSVNIG (121 aa)) is disordered. 2 stretches are compositionally biased toward low complexity: residues 167–176 (PTHSTPSSST) and 224–236 (SSSS…SAGN). N-linked (GlcNAc...) asparagine glycans are attached at residues N236, N278, N326, N388, N645, N693, and N720. Polar residues predominate over residues 259-282 (LLTTKSSPNRTPGTTASAANNSVN). Positions 361 to 390 (DDEYDDDLPAASSTTPQPSNNGGDCVHNSS) are disordered. Positions 371 to 390 (ASSTTPQPSNNGGDCVHNSS) are enriched in polar residues. The GAIN-B domain maps to 551–744 (RNVVQKVKNI…AILMDVVDEH (194 aa)). Cystine bridges form between C699–C726 and C714–C728. Residues 699 to 744 (CVFWNYIDHAWSANGCSLESTNRTHSVCSCNHLTNFAILMDVVDEH) are GPS. The helical transmembrane segment at 758–778 (IFIYISVAICVVFIIIALLTL) threads the bilayer. Residues 779–791 (KLFNGVFVKSART) are Cytoplasmic-facing. Residues 792–812 (SIYSSIYICLLAIELLFLLGI) form a helical membrane-spanning segment. Residues 813–818 (EQTETS) lie on the Extracellular side of the membrane. A helical membrane pass occupies residues 819–839 (IFCGFITVFLHCAILSGTAWF). At 840-865 (CYEAFHSYSTLTSDELLLEVDQTPKV) the chain is on the cytoplasmic side. A helical membrane pass occupies residues 866 to 886 (NCYYLLSYGLSLSVVAISLVI). Over 887–910 (DPSTYTQNDYCVLMEANALFYSTF) the chain is Extracellular. The helical transmembrane segment at 911-931 (VAPVLIFFVAAITYTFLSWII) threads the bilayer. Residues 932–958 (MRRKSRTALKTKEHTRLANVRFDIRCS) are Cytoplasmic-facing. The chain crosses the membrane as a helical span at residues 959–979 (FVFLLLLSVVWCCAYFYLRGA). At 980–986 (KLDEDGA) the chain is on the extracellular side. The chain crosses the membrane as a helical span at residues 987–1007 (PIYGYCFICFNTLLGIYIFVF). Residues 1008-1725 (HCIQNEKIRR…VRCYLEPLAK (718 aa)) lie on the Cytoplasmic side of the membrane. The tract at residues 1056–1088 (TANQSAGTLSKSKSKLPLGAGDEARDGDAQQQQ) is disordered. The residue at position 1153 (S1153) is a Phosphoserine. Disordered stretches follow at residues 1236-1263 (HNNQ…LHSR), 1309-1337 (QQLQ…AEQH), 1472-1555 (GGGS…SDER), and 1636-1705 (LFGH…QARH). Over residues 1237 to 1246 (NNQHGKKKRG) the composition is skewed to basic residues. Phosphoserine occurs at positions 1255 and 1262. Residues 1309–1327 (QQLQQQQLRQQRQQQQQQL) are compositionally biased toward low complexity. Phosphoserine occurs at positions 1328 and 1329. Positions 1478 to 1496 (GGSVTSRSQQQQQQQLKQK) are enriched in low complexity. 2 stretches are compositionally biased toward acidic residues: residues 1505 to 1522 (DDDD…DEVT) and 1532 to 1543 (CDDEDNESDIDD). The segment covering 1651–1666 (QTPAQKRQQLQKLSPQ) has biased composition (polar residues). A compositionally biased stretch (low complexity) spans 1667-1683 (STTSSSSHTSHSNPQHA). A compositionally biased stretch (basic residues) spans 1684–1693 (PAHHLQHHHT). The span at 1694-1705 (QQQQQQQQQARH) shows a compositional bias: low complexity.

Belongs to the G-protein coupled receptor 2 family. LN-TM7 subfamily. Forms a heterodimer, consisting of a large extracellular region non-covalently linked to a seven-transmembrane moiety. In terms of processing, proteolytically cleaved into 2 subunits, an extracellular subunit and a seven-transmembrane subunit.

It is found in the cell membrane. In Drosophila mojavensis (Fruit fly), this protein is Latrophilin Cirl.